Reading from the N-terminus, the 106-residue chain is Diptericin A (106 aa).

Positions M1–A19 are cleaved as a signal peptide. A propeptide spans Y20–P23 (removed by a dipeptidylpeptidase).

The protein belongs to the attacin/sarcotoxin-2 family.

The protein resides in the secreted. Antimicrobial peptide required to resist Gram-negative bacterial infections, regulated by Dredd. The protein is Diptericin A of Drosophila melanogaster (Fruit fly).